Consider the following 100-residue polypeptide: MPKRKVSSAEGAAKEEPKRRSARLSAKPPAKVEAKPKKAAAKDKSSDKKVQTKGKRGAKGKQAEVANQETKEDLPAENGETKTEESPASDEAGEKEAKSD.

The tract at residues 1-100 (MPKRKVSSAE…EAGEKEAKSD (100 aa)) is disordered. At Ser7 the chain carries ADP-ribosylserine. At Ser8 the chain carries Phosphoserine. Residue Lys14 is modified to N6-acetyllysine. Position 21 is a phosphoserine; by RPS6KA5 (Ser21). Position 25 is an ADP-ribosylserine; alternate (Ser25). A Phosphoserine; alternate; by RPS6KA5 modification is found at Ser25. Lys27 carries the N6-acetyllysine modification. Composition is skewed to basic and acidic residues over residues 30-50 (AKVEAKPKKAAAKDKSSDKKV) and 69-85 (ETKEDLPAENGETKTEE). The residue at position 81 (Thr81) is a Phosphothreonine. Lys82 carries the N6-acetyllysine modification. Phosphoserine occurs at positions 86, 89, and 99.

Interacts with transcriptional regulator SEHBP. Phosphorylation on Ser-21 and Ser-25 weakens binding to nucleosomes and increases the rate of H3 phosphorylation. Phosphorylation favors cytoplasmic localization.

It is found in the nucleus. The protein localises to the cytoplasm. In terms of biological role, binds to the inner side of the nucleosomal DNA thus altering the interaction between the DNA and the histone octamer. May be involved in the process which maintains transcribable genes in a unique chromatin conformation. Inhibits the phosphorylation of nucleosomal histones H3 and H2A by RPS6KA5/MSK1 and RPS6KA3/RSK2. This is Non-histone chromosomal protein HMG-14 (HMGN1) from Homo sapiens (Human).